Consider the following 369-residue polypeptide: Anthranilate phosphoribosyltransferase (369 aa).

Residues G111, 114 to 115 (GD), T119, 121 to 124 (NIST), 139 to 147 (KHGNRGVSS), and S151 each bind 5-phospho-alpha-D-ribose 1-diphosphate. Position 111 (G111) interacts with anthranilate. S123 contacts Mg(2+). N142 serves as a coordination point for anthranilate. An anthranilate-binding site is contributed by R197. The Mg(2+) site is built by D256 and E257.

It belongs to the anthranilate phosphoribosyltransferase family. In terms of assembly, homodimer. The cofactor is Mg(2+).

It catalyses the reaction N-(5-phospho-beta-D-ribosyl)anthranilate + diphosphate = 5-phospho-alpha-D-ribose 1-diphosphate + anthranilate. The protein operates within amino-acid biosynthesis; L-tryptophan biosynthesis; L-tryptophan from chorismate: step 2/5. In terms of biological role, catalyzes the transfer of the phosphoribosyl group of 5-phosphorylribose-1-pyrophosphate (PRPP) to anthranilate to yield N-(5'-phosphoribosyl)-anthranilate (PRA). The polypeptide is Anthranilate phosphoribosyltransferase (Cupriavidus pinatubonensis (strain JMP 134 / LMG 1197) (Cupriavidus necator (strain JMP 134))).